Here is a 4466-residue protein sequence, read N- to C-terminus: Dynein beta chain, ciliary (4466 aa).

The tract at residues 1–1813 (MADVVDPRLE…YANICDAQFK (1813 aa)) is stem. An ATP-binding site is contributed by 154-161 (AGQVKGKT). Coiled-coil stretches lie at residues 733–805 (TVLE…WTKQ), 1036–1056 (TLDQ…EADE), 1306–1337 (WLEI…AWDA), and 1443–1468 (LLKS…MTSK). 4 AAA regions span residues 1814 to 2035 (YSYE…VLVV), 2095 to 2316 (KVVK…VRFK), 2422 to 2669 (ELDP…VFQG), and 2767 to 3016 (TYNE…ERRY). Residues 1852 to 1859 (GPAGTGKT), 2133 to 2140 (GNAGTGKS), 2460 to 2467 (GNAGLGKS), and 2805 to 2812 (GVGGSGKQ) each bind ATP. Coiled-coil stretches lie at residues 3033–3092 (SLLS…QVVG), 3263–3325 (EPKR…SRTI), and 3573–3642 (QERP…EEAK). The segment at 3033 to 3325 (SLLSMKSKEL…QEAEATSRTI (293 aa)) is stalk. 2 AAA regions span residues 3409-3636 (LTDD…EISV) and 3846-4072 (VRNF…VLYN).

This sequence belongs to the dynein heavy chain family. In terms of assembly, consists of at least two heavy chains (alpha and beta), three intermediate chains and several light chains.

It localises to the cell projection. Its subcellular location is the cilium. The protein localises to the flagellum. The protein resides in the cytoplasm. It is found in the cytoskeleton. It localises to the flagellum axoneme. In terms of biological role, force generating protein of eukaryotic cilia and flagella. Produces force towards the minus ends of microtubules. Dynein has ATPase activity; the force-producing power stroke is thought to occur on release of ADP. This chain is Dynein beta chain, ciliary, found in Tripneustes gratilla (Hawaian sea urchin).